We begin with the raw amino-acid sequence, 299 residues long: UDP-N-acetylenolpyruvoylglucosamine reductase (299 aa).

Positions 28–193 (IGGPVDLMVL…VSALMQLHKE (166 aa)) constitute an FAD-binding PCMH-type domain. R172 is an active-site residue. Residue S222 is the Proton donor of the active site. Residue E292 is part of the active site.

Belongs to the MurB family. The cofactor is FAD.

It localises to the cytoplasm. The enzyme catalyses UDP-N-acetyl-alpha-D-muramate + NADP(+) = UDP-N-acetyl-3-O-(1-carboxyvinyl)-alpha-D-glucosamine + NADPH + H(+). It functions in the pathway cell wall biogenesis; peptidoglycan biosynthesis. In terms of biological role, cell wall formation. This chain is UDP-N-acetylenolpyruvoylglucosamine reductase, found in Syntrophomonas wolfei subsp. wolfei (strain DSM 2245B / Goettingen).